A 436-amino-acid chain; its full sequence is Ribosomal protein uS12 methylthiotransferase RimO (436 aa).

The MTTase N-terminal domain maps to 4–122 (KRIDIITLGC…LLQDLGKTYH (119 aa)). Residues C13, C51, C85, C146, C150, and C153 each coordinate [4Fe-4S] cluster. Positions 132–363 (TTPKHYAYLK…MDIQQGISAE (232 aa)) constitute a Radical SAM core domain. The TRAM domain occupies 366 to 433 (AAKIGQQMKV…DFDLYAKILN (68 aa)).

It belongs to the methylthiotransferase family. RimO subfamily. [4Fe-4S] cluster is required as a cofactor.

It localises to the cytoplasm. The enzyme catalyses L-aspartate(89)-[ribosomal protein uS12]-hydrogen + (sulfur carrier)-SH + AH2 + 2 S-adenosyl-L-methionine = 3-methylsulfanyl-L-aspartate(89)-[ribosomal protein uS12]-hydrogen + (sulfur carrier)-H + 5'-deoxyadenosine + L-methionine + A + S-adenosyl-L-homocysteine + 2 H(+). Its function is as follows. Catalyzes the methylthiolation of an aspartic acid residue of ribosomal protein uS12. The chain is Ribosomal protein uS12 methylthiotransferase RimO from Bacteroides thetaiotaomicron (strain ATCC 29148 / DSM 2079 / JCM 5827 / CCUG 10774 / NCTC 10582 / VPI-5482 / E50).